An 874-amino-acid chain; its full sequence is Valine--tRNA ligase (874 aa).

Residues 1 to 10 (MTENSQQQPP) are compositionally biased toward polar residues. The disordered stretch occupies residues 1 to 23 (MTENSQQQPPASEPELPTQYAPA). The 'HIGH' region motif lies at 57 to 67 (PNVTGSLHLGH). The short motif at 531–535 (KMSKS) is the 'KMSKS' region element. K534 is a binding site for ATP. Residues 806 to 871 (IDIVAERKRL…ARIQAQLDRM (66 aa)) adopt a coiled-coil conformation.

It belongs to the class-I aminoacyl-tRNA synthetase family. ValS type 1 subfamily. In terms of assembly, monomer.

The protein localises to the cytoplasm. It carries out the reaction tRNA(Val) + L-valine + ATP = L-valyl-tRNA(Val) + AMP + diphosphate. In terms of biological role, catalyzes the attachment of valine to tRNA(Val). As ValRS can inadvertently accommodate and process structurally similar amino acids such as threonine, to avoid such errors, it has a 'posttransfer' editing activity that hydrolyzes mischarged Thr-tRNA(Val) in a tRNA-dependent manner. This Streptomyces avermitilis (strain ATCC 31267 / DSM 46492 / JCM 5070 / NBRC 14893 / NCIMB 12804 / NRRL 8165 / MA-4680) protein is Valine--tRNA ligase.